Reading from the N-terminus, the 318-residue chain is Galactose-1-phosphate uridylyltransferase (318 aa).

C32, C35, and H90 together coordinate Zn(2+). N130 serves as a coordination point for UDP-alpha-D-glucose. H141 contributes to the Zn(2+) binding site. H143 serves as the catalytic Tele-UMP-histidine intermediate. Q145 serves as a coordination point for UDP-alpha-D-glucose.

The protein belongs to the galactose-1-phosphate uridylyltransferase type 1 family. Zn(2+) is required as a cofactor.

The catalysed reaction is alpha-D-galactose 1-phosphate + UDP-alpha-D-glucose = alpha-D-glucose 1-phosphate + UDP-alpha-D-galactose. It participates in carbohydrate metabolism; galactose metabolism. This Thermotoga maritima (strain ATCC 43589 / DSM 3109 / JCM 10099 / NBRC 100826 / MSB8) protein is Galactose-1-phosphate uridylyltransferase (galT).